Here is a 336-residue protein sequence, read N- to C-terminus: Glyceraldehyde-3-phosphate dehydrogenase (336 aa).

Residues 12–13 (RI), Asp34, Arg78, and Thr121 each bind NAD(+). Residues 151-153 (SCT), Thr182, Arg199, 212-213 (TG), and Arg235 contribute to the D-glyceraldehyde 3-phosphate site. Residue Cys152 is the Nucleophile of the active site. Asn316 serves as a coordination point for NAD(+).

Belongs to the glyceraldehyde-3-phosphate dehydrogenase family. In terms of assembly, homotetramer.

It localises to the cytoplasm. It carries out the reaction D-glyceraldehyde 3-phosphate + phosphate + NAD(+) = (2R)-3-phospho-glyceroyl phosphate + NADH + H(+). It functions in the pathway carbohydrate degradation; glycolysis; pyruvate from D-glyceraldehyde 3-phosphate: step 1/5. Functionally, catalyzes the oxidative phosphorylation of glyceraldehyde 3-phosphate (G3P) to 1,3-bisphosphoglycerate (BPG) using the cofactor NAD. The first reaction step involves the formation of a hemiacetal intermediate between G3P and a cysteine residue, and this hemiacetal intermediate is then oxidized to a thioester, with concomitant reduction of NAD to NADH. The reduced NADH is then exchanged with the second NAD, and the thioester is attacked by a nucleophilic inorganic phosphate to produce BPG. In Streptococcus pyogenes serotype M3 (strain ATCC BAA-595 / MGAS315), this protein is Glyceraldehyde-3-phosphate dehydrogenase (gap).